A 361-amino-acid polypeptide reads, in one-letter code: uncharacterized protein (361 aa).

WD repeat units follow at residues 57–96 (RHKK…VSSK), 103–142 (KEIS…GIIH), 146–184 (DHID…KPIL), 187–229 (EQDE…DHTD), 237–275 (SHDF…YERI), and 280–318 (SSRS…GDES). The segment at 311–361 (DQKEGDESSSSDNLDSDEDSSSDSEFSSPKKKKKVGNQGKKPLGTDFFDGL) is disordered.

Its subcellular location is the nucleus. The protein localises to the nucleolus. This is an uncharacterized protein from Schizosaccharomyces pombe (strain 972 / ATCC 24843) (Fission yeast).